The primary structure comprises 137 residues: MIKTVIDNLCYNFGENMKNDDAIKVLSNELLKGAKMLSTHCSKCGCPLFEKDGKIYCPICEKLKNKETIEKGENEKEIKNEIERKKSEINEILDLNKVVMDKINYLVMKLKEEDEVSRIREIAEAIYVLIKLKKKIE.

The protein belongs to the UPF0148 family.

The polypeptide is UPF0148 protein MJ0890 (Methanocaldococcus jannaschii (strain ATCC 43067 / DSM 2661 / JAL-1 / JCM 10045 / NBRC 100440) (Methanococcus jannaschii)).